The following is a 483-amino-acid chain: NADH-quinone oxidoreductase subunit N (483 aa).

Transmembrane regions (helical) follow at residues A13–V33, Y39–V57, P76–S96, F110–F130, L131–Q151, F165–V185, I206–V226, P240–V260, M277–S297, M302–S322, M330–L350, L373–F393, I406–Y426, and L459–I479.

This sequence belongs to the complex I subunit 2 family. In terms of assembly, NDH-1 is composed of 14 different subunits. Subunits NuoA, H, J, K, L, M, N constitute the membrane sector of the complex.

Its subcellular location is the cell inner membrane. The catalysed reaction is a quinone + NADH + 5 H(+)(in) = a quinol + NAD(+) + 4 H(+)(out). Its function is as follows. NDH-1 shuttles electrons from NADH, via FMN and iron-sulfur (Fe-S) centers, to quinones in the respiratory chain. The immediate electron acceptor for the enzyme in this species is believed to be ubiquinone. Couples the redox reaction to proton translocation (for every two electrons transferred, four hydrogen ions are translocated across the cytoplasmic membrane), and thus conserves the redox energy in a proton gradient. The protein is NADH-quinone oxidoreductase subunit N of Thiobacillus denitrificans (strain ATCC 25259 / T1).